A 144-amino-acid chain; its full sequence is Large ribosomal subunit protein uL16 (144 aa).

The protein belongs to the universal ribosomal protein uL16 family. Part of the 50S ribosomal subunit.

Its function is as follows. Binds 23S rRNA and is also seen to make contacts with the A and possibly P site tRNAs. This is Large ribosomal subunit protein uL16 from Erythrobacter litoralis (strain HTCC2594).